Here is a 197-residue protein sequence, read N- to C-terminus: Rac-like GTP-binding protein ARAC11 (197 aa).

Position 13-20 (13-20 (GDGAVGKT)) interacts with GTP. The Effector region signature appears at 35–43 (YVPTVFDNF). GTP-binding positions include 60 to 64 (DTAGQ) and 118 to 121 (TKLD). Cys-194 carries the cysteine methyl ester modification. A lipid anchor (S-geranylgeranyl cysteine) is attached at Cys-194. A propeptide spans 195-197 (SIL) (removed in mature form).

It belongs to the small GTPase superfamily. Rho family. In terms of assembly, part of a complex containing ROPGEF1 and PRK2. Interacts with UGT1, ICR1, ICR2, ICR3, ICR4 and ICR5. Interacts with PHIP1 when activated by GTP. Exclusively expressed in mature pollen and pollen tubes.

It localises to the cytoplasm. It is found in the membrane. It carries out the reaction GTP + H2O = GDP + phosphate + H(+). In terms of biological role, may be involved in cell polarity control during the actin-dependent tip growth of pollen tubes. May regulate callose synthase 1 (CALS1) activity through the interaction with UGT1. Its function is as follows. Inactive GDP-bound Rho GTPases reside in the cytosol, are found in a complex with Rho GDP-dissociation inhibitors (Rho GDIs), and are released from the GDI protein in order to translocate to membranes upon activation. The protein is Rac-like GTP-binding protein ARAC11 of Arabidopsis thaliana (Mouse-ear cress).